A 576-amino-acid polypeptide reads, in one-letter code: MCNTYYKRVKFNLFLYTNSIEMELLAVASIIGYGLFSSQQGRETRPDRNRYAEALGSGQGLDEDYDVKPTDMVRKYRKKAEKRWKKAQVPKESGIITPNMRPSEVMPYFTSGKSMNTNTDYKQRKMELFTGGVLDGHSVSGTYKHKVEAANMFGMTPQGRVTSDGTVGNAPGDTELLKARSVNSHQYNNVLPTEQLRVGPGLGVGPEVAATGGFHQFYRQLPLNINEYKLTQLPGRLVPGGTTTGGKGEIQQIASVNHNPDALVLNYDDRPPEATPNGAILASTQYGKQPRGYAGLRPYEKNYEGIAEADVSALQARYLDQTRGRPRTGDGDTEPIINPNGERDGTGSYVTENMCSMTLESQRGLVNRYITPPGVTGVVQQGGEMRPEFVPETTIREQYEDIYYTGPAGTTVTPTEPMNVVELQPESRHAKRAGQDRAYTPGAGRVNNFAPAAQGAYGLKDHPTYNALQHVVSEPIEQTFLPAAQGDDDRFGTKSNVNNPWGNPASLQIANNQLAANKFNRDVTNTVNLDYDAGQPMKQQNFQPKAWIPNNTDDMKMLPLWKRKQLQAQKNKQQRK.

The tract at residues 13–35 is hydrophobic; that stretch reads LFLYTNSIEMELLAVASIIGYGL. The segment at 322-348 is disordered; it reads TRGRPRTGDGDTEPIINPNGERDGTGS.

In terms of assembly, interacts with the major capsid protein.

The protein localises to the virion. One of the minor capsid proteins that constitute a network internal to the major capsid proteins and outside the lipid membrane. The minor capsid proteins glue and stabilize the capsomers. Also acts as a molecular tape measure protein that determines the size of the viral capsid. The protein is Minor capsid protein P2 of Chlorella (PBCV-1).